The sequence spans 638 residues: DNA-directed RNA polymerase I subunit RPA1 (638 aa).

Positions 297–317 (EYDEEDDESSGESEVREGDEE) are enriched in acidic residues. The interval 297–321 (EYDEEDDESSGESEVREGDEEQEKK) is disordered.

Belongs to the RNA polymerase beta' chain family. Each class of RNA polymerase is assembled from 9 to 14 different polypeptides. This subunit is the largest component of RNA polymerase I.

Its subcellular location is the nucleus. It carries out the reaction RNA(n) + a ribonucleoside 5'-triphosphate = RNA(n+1) + diphosphate. In terms of biological role, DNA-dependent RNA polymerase catalyzes the transcription of DNA into RNA using the four ribonucleoside triphosphates as substrates. RNA polymerase I is essentially used to transcribe ribosomal DNA units. The polypeptide is DNA-directed RNA polymerase I subunit RPA1 (RPA1) (Euplotoides octocarinatus (Freshwater ciliate)).